The primary structure comprises 346 residues: Ribonucleoside-diphosphate reductase subunit beta (346 aa).

The Fe cation site is built by Glu-89, Glu-120, and His-123. Tyr-129 is an active-site residue. The Fe cation site is built by Glu-193, Glu-227, and His-230.

It belongs to the ribonucleoside diphosphate reductase small chain family. As to quaternary structure, tetramer of two alpha and two beta subunits. Fe cation is required as a cofactor.

The enzyme catalyses a 2'-deoxyribonucleoside 5'-diphosphate + [thioredoxin]-disulfide + H2O = a ribonucleoside 5'-diphosphate + [thioredoxin]-dithiol. Functionally, provides the precursors necessary for DNA synthesis. Catalyzes the biosynthesis of deoxyribonucleotides from the corresponding ribonucleotides. This Chlamydia trachomatis serovar D (strain ATCC VR-885 / DSM 19411 / UW-3/Cx) protein is Ribonucleoside-diphosphate reductase subunit beta (nrdB).